The primary structure comprises 435 residues: Gamma-glutamyl phosphate reductase (435 aa).

Belongs to the gamma-glutamyl phosphate reductase family.

Its subcellular location is the cytoplasm. The catalysed reaction is L-glutamate 5-semialdehyde + phosphate + NADP(+) = L-glutamyl 5-phosphate + NADPH + H(+). It functions in the pathway amino-acid biosynthesis; L-proline biosynthesis; L-glutamate 5-semialdehyde from L-glutamate: step 2/2. Functionally, catalyzes the NADPH-dependent reduction of L-glutamate 5-phosphate into L-glutamate 5-semialdehyde and phosphate. The product spontaneously undergoes cyclization to form 1-pyrroline-5-carboxylate. This Xylella fastidiosa (strain M12) protein is Gamma-glutamyl phosphate reductase.